A 199-amino-acid chain; its full sequence is Protein-methionine-sulfoxide reductase heme-binding subunit MsrQ (199 aa).

Transmembrane regions (helical) follow at residues 10–30, 82–102, 116–136, and 153–173; these read WLKVCLHLAGFLPLLWLFWAI, LWCFVWATLHLTSYALLELGI, PYLTLGIISWLVLLALTLTST, and VVYLVAILAPIHYLWSVKILS.

Belongs to the MsrQ family. As to quaternary structure, heterodimer of a catalytic subunit (MsrP) and a heme-binding subunit (MsrQ). FMN serves as cofactor. The cofactor is heme b.

The protein resides in the cell inner membrane. Part of the MsrPQ system that repairs oxidized periplasmic proteins containing methionine sulfoxide residues (Met-O), using respiratory chain electrons. Thus protects these proteins from oxidative-stress damage caused by reactive species of oxygen and chlorine generated by the host defense mechanisms. MsrPQ is essential for the maintenance of envelope integrity under bleach stress, rescuing a wide series of structurally unrelated periplasmic proteins from methionine oxidation, including the primary periplasmic chaperone SurA and the lipoprotein Pal. MsrQ provides electrons for reduction to the reductase catalytic subunit MsrP, using the quinone pool of the respiratory chain. This chain is Protein-methionine-sulfoxide reductase heme-binding subunit MsrQ, found in Salmonella enteritidis PT4 (strain P125109).